The sequence spans 127 residues: Large ribosomal subunit protein bL17 (127 aa).

It belongs to the bacterial ribosomal protein bL17 family. As to quaternary structure, part of the 50S ribosomal subunit. Contacts protein L32.

The sequence is that of Large ribosomal subunit protein bL17 from Xanthomonas campestris pv. campestris (strain 8004).